A 256-amino-acid chain; its full sequence is Spheroidene monooxygenase (256 aa).

The segment covering 1–23 (MTNELSNAAGASQQGPAASSFSA) has biased composition (low complexity). Residues 1–26 (MTNELSNAAGASQQGPAASSFSADTP) are disordered.

Belongs to the CrtA family. Heme serves as cofactor.

The catalysed reaction is spheroidene + 4 reduced [2Fe-2S]-[ferredoxin] + 2 O2 + 4 H(+) = spheroiden-2-one + 4 oxidized [2Fe-2S]-[ferredoxin] + 3 H2O. The enzyme catalyses spirilloxanthin + 4 reduced [2Fe-2S]-[ferredoxin] + 2 O2 + 4 H(+) = 2-oxospirilloxanthin + 4 oxidized [2Fe-2S]-[ferredoxin] + 3 H2O. It catalyses the reaction 2-oxospirilloxanthin + 4 reduced [2Fe-2S]-[ferredoxin] + 2 O2 + 4 H(+) = 2,2'-dioxospirilloxanthin + 4 oxidized [2Fe-2S]-[ferredoxin] + 3 H2O. It carries out the reaction spheroidene + 2 reduced [2Fe-2S]-[ferredoxin] + O2 + 2 H(+) = 2-hydroxyspheroidene + 2 oxidized [2Fe-2S]-[ferredoxin] + H2O. The catalysed reaction is 2-hydroxyspheroidene + 2 reduced [2Fe-2S]-[ferredoxin] + O2 + 2 H(+) = 2,2-dihydroxyspheroidene + 2 oxidized [2Fe-2S]-[ferredoxin] + H2O. The enzyme catalyses 2,2-dihydroxyspheroidene = spheroiden-2-one + H2O. It catalyses the reaction spirilloxanthin + 2 reduced [2Fe-2S]-[ferredoxin] + O2 + 2 H(+) = 2-hydroxyspirilloxanthin + 2 oxidized [2Fe-2S]-[ferredoxin] + H2O. It carries out the reaction 2-hydroxyspirilloxanthin + 2 reduced [2Fe-2S]-[ferredoxin] + O2 + 2 H(+) = 2,2-dihydroxyspirilloxanthin + 2 oxidized [2Fe-2S]-[ferredoxin] + H2O. The catalysed reaction is 2,2-dihydroxyspirilloxanthin = 2-oxospirilloxanthin + H2O. The enzyme catalyses 2-oxospirilloxanthin + 2 reduced [2Fe-2S]-[ferredoxin] + O2 + 2 H(+) = 2'-hydroxy-2-oxospirilloxanthin + 2 oxidized [2Fe-2S]-[ferredoxin] + H2O. It catalyses the reaction 2'-hydroxy-2-oxospirilloxanthin + 2 reduced [2Fe-2S]-[ferredoxin] + O2 + 2 H(+) = 2',2'-dihydroxy-2-oxospirilloxanthin + 2 oxidized [2Fe-2S]-[ferredoxin] + H2O. It carries out the reaction 2',2'-dihydroxy-2-oxospirilloxanthin = 2,2'-dioxospirilloxanthin + H2O. It participates in carotenoid biosynthesis; spheroidene biosynthesis. Its pathway is carotenoid biosynthesis; spirilloxanthin biosynthesis. Its function is as follows. Involved in the biosynthesis of the carotenoids spheroidene and spirilloxanthin. Catalyzes the introduction of one keto group at the C-2 position of spheroidene and two keto groups at the C-2 and C-2' positions of spirilloxanthin. This Rubrivivax gelatinosus (Rhodocyclus gelatinosus) protein is Spheroidene monooxygenase.